Consider the following 368-residue polypeptide: Multifunctional CCA protein (368 aa).

2 residues coordinate ATP: Gly-8 and Arg-11. CTP contacts are provided by Gly-8 and Arg-11. Mg(2+) is bound by residues Asp-21 and Asp-23. Positions 91, 137, and 140 each coordinate ATP. Arg-91, Arg-137, and Arg-140 together coordinate CTP.

It belongs to the tRNA nucleotidyltransferase/poly(A) polymerase family. Bacterial CCA-adding enzyme type 1 subfamily. As to quaternary structure, monomer. Can also form homodimers and oligomers. Mg(2+) serves as cofactor. Ni(2+) is required as a cofactor.

The catalysed reaction is a tRNA precursor + 2 CTP + ATP = a tRNA with a 3' CCA end + 3 diphosphate. The enzyme catalyses a tRNA with a 3' CCA end + 2 CTP + ATP = a tRNA with a 3' CCACCA end + 3 diphosphate. In terms of biological role, catalyzes the addition and repair of the essential 3'-terminal CCA sequence in tRNAs without using a nucleic acid template. Adds these three nucleotides in the order of C, C, and A to the tRNA nucleotide-73, using CTP and ATP as substrates and producing inorganic pyrophosphate. tRNA 3'-terminal CCA addition is required both for tRNA processing and repair. Also involved in tRNA surveillance by mediating tandem CCA addition to generate a CCACCA at the 3' terminus of unstable tRNAs. While stable tRNAs receive only 3'-terminal CCA, unstable tRNAs are marked with CCACCA and rapidly degraded. The chain is Multifunctional CCA protein from Pseudomonas putida (strain ATCC 47054 / DSM 6125 / CFBP 8728 / NCIMB 11950 / KT2440).